The sequence spans 1104 residues: Transient receptor potential cation channel subfamily M member 8 (1104 aa).

Residues 1-22 (MSFEGARLSMRSRRNGTMGSTR) form a disordered region. Over 1–733 (MSFEGARLSM…LWYYVAFFTS (733 aa)) the chain is Cytoplasmic. The chain crosses the membrane as a helical span at residues 734–758 (PFVVFSWNVVFYIAFLLLFAYVLLM). The Extracellular segment spans residues 759–765 (DFHSVPH). Residues 766–789 (TPELILYALVFVLFCDEVRQWYMN) form a helical membrane-spanning segment. Glu-782 and Gln-785 together coordinate Ca(2+). The Cytoplasmic portion of the chain corresponds to 790–796 (GVNYFTD). A helical transmembrane segment spans residues 797–817 (LWNVMDTLGLFYFIAGIVFRL). Residues Asn-799 and Asp-802 each contribute to the Ca(2+) site. Residues 818-822 (HSSNK) are Extracellular-facing. The helical transmembrane segment at 823-848 (SSLYSGRVIFCLDYIIFTLRLIHIFT) threads the bilayer. Topologically, residues 849–853 (VSRNL) are cytoplasmic. The chain crosses the membrane as a helical span at residues 854-890 (GPKIIMLQRMLIDVFFFLFLFAVWMVAFGVARQGILR). Residues 891–895 (QNEQR) are Extracellular-facing. Positions 896–912 (WRWIFRSVIYEPYLAMF) form an intramembrane region, pore-forming. Over 913–953 (GQVPSDVDSTTYDFSHCTFSGNESKPLCVELDEHNLPRFPE) the chain is Extracellular. Residue Asn-934 is glycosylated (N-linked (GlcNAc...) (complex) asparagine). A helical transmembrane segment spans residues 954 to 984 (WITIPLVCIYMLSTNILLVNLLVAMFGYTVG). The Cytoplasmic portion of the chain corresponds to 985–1104 (IVQENNDQVW…LLKEIANNIK (120 aa)). Positions 1069-1104 (TKANDNSEEMRHRFRQLDSKLNDLKSLLKEIANNIK) form a coiled coil.

Belongs to the transient receptor (TC 1.A.4) family. LTrpC subfamily. TRPM8 sub-subfamily. As to quaternary structure, homotetramer. Interacts (via N-terminus and C-terminus domains) with TCAF1; the interaction stimulates TRPM8 channel activity. Interacts (via N-terminus and C-terminus domains) with TCAF2; the interaction inhibits TRPM8 channel activity. In terms of processing, N-glycosylation is not essential for but facilitates cell surface expression, multimerization, association with lipid rafts and ion channel activity. In terms of tissue distribution, expressed in dorsal root and trigeminal ganglia. Specifically expressed in a subset of pain- and temperature-sensing neurons. Not expressed in heavily myelinated neurons. Not expressed in neurons expressing TRPA1 or TRPV1.

The protein localises to the cell membrane. It localises to the membrane raft. It carries out the reaction Ca(2+)(in) = Ca(2+)(out). The catalysed reaction is Na(+)(in) = Na(+)(out). The enzyme catalyses K(+)(in) = K(+)(out). With respect to regulation, activated by cold temperatures and by both natural and synthetic cooling compounds such as menthol and icilin. Activation of the channel requires the presence of PI(4,5)P2; PI(4,5)P2 is necessary to gate the channel. Activated by intracellular Ca(2+). Non-selective ion channel permeable to monovalent and divalent cations, including Na(+), K(+), and Ca(2+), with higher permeability for Ca(2+). Activated by multiple factors, such as temperature, voltage, pressure, and changes in osmolality. Activated by cool temperatures (&lt;23-28 degrees Celsius) and by chemical ligands evoking a sensation of coolness, such as menthol and icilin, therefore plays a central role in the detection of environmental cold temperatures. TRPM8 is a voltage-dependent channel; its activation by cold or chemical ligands shifts its voltage thresholds towards physiological membrane potentials, leading to the opening of the channel. In addition to its critical role in temperature sensing, regulates basal tear secretion by sensing evaporation-induced cooling and changes in osmolality. The protein is Transient receptor potential cation channel subfamily M member 8 (Trpm8) of Mus musculus (Mouse).